Here is a 376-residue protein sequence, read N- to C-terminus: Guanine nucleotide-binding protein G(s) subunit alpha (376 aa).

G2 carries N-palmitoyl glycine lipidation. A lipid anchor (S-palmitoyl cysteine) is attached at C3. The 341-residue stretch at 36–376 (GTHRLLLLGA…RMHLRQYELL (341 aa)) folds into the G-alpha domain. A G1 motif region spans residues 39–52 (RLLLLGAGESGKST). GTP is bound by residues 44 to 51 (GAGESGKS), 180 to 186 (LRCRVLT), 205 to 209 (DVGGQ), 274 to 277 (NKQD), and A348. Positions 51 and 186 each coordinate Mg(2+). The tract at residues 178 to 186 (DILRCRVLT) is G2 motif. The segment at 201–210 (FHMFDVGGQR) is G3 motif. The G4 motif stretch occupies residues 270–277 (ILFLNKQD). The tract at residues 346 to 351 (TCAVDT) is G5 motif.

This sequence belongs to the G-alpha family. G(s) subfamily. As to quaternary structure, g proteins are composed of 3 units; alpha, beta and gamma. The alpha chain contains the guanine nucleotide binding site.

Guanine nucleotide-binding proteins (G proteins) are involved as modulators or transducers in various transmembrane signaling systems. The G(s) protein is involved in hormonal regulation of adenylate cyclase: it activates the cyclase in response to beta-adrenergic stimuli. The chain is Guanine nucleotide-binding protein G(s) subunit alpha from Lymnaea stagnalis (Great pond snail).